A 584-amino-acid chain; its full sequence is Asparagine synthetase [glutamine-hydrolyzing] 1 (584 aa).

The active-site For GATase activity is the C2. Residues 2 to 185 (CGILAVLGCS…PGHFYSSKLG (184 aa)) enclose the Glutamine amidotransferase type-2 domain. Residues 50–54 (RLAVI), 75–77 (NGE), and D98 each bind L-glutamine. The 324-residue stretch at 193 to 516 (PPWFNESVPS…PQNSARLTVP (324 aa)) folds into the Asparagine synthetase domain. ATP contacts are provided by residues L231, V267, and 341–342 (SG).

The enzyme catalyses L-aspartate + L-glutamine + ATP + H2O = L-asparagine + L-glutamate + AMP + diphosphate + H(+). Its pathway is amino-acid biosynthesis; L-asparagine biosynthesis; L-asparagine from L-aspartate (L-Gln route): step 1/1. In terms of biological role, essential for nitrogen assimilation, distribution and remobilization within the plant via the phloem. The polypeptide is Asparagine synthetase [glutamine-hydrolyzing] 1 (ASN1) (Arabidopsis thaliana (Mouse-ear cress)).